Here is a 303-residue protein sequence, read N- to C-terminus: Glutathione transport system permease protein GsiD (303 aa).

Helical transmembrane passes span 40–60, 105–125, 144–164, 165–185, 222–242, and 266–286; these read AMTAALFVILLIVVAIFARWI, LAAGVFAVFIGAAIGTLLGLL, LFAFPGILLAIAVVAVLGSGI, ANVIIAVAIFSIPAFARLVRG, IVVFFTMRIGTSIISAASLSF, and VIAPHVAVFPALAIFLTVLAF. The region spanning 101 to 290 is the ABC transmembrane type-1 domain; that stretch reads AQISLAAGVF…LTVLAFNLLG (190 aa).

This sequence belongs to the binding-protein-dependent transport system permease family. As to quaternary structure, the complex is composed of two ATP-binding proteins (GsiA), two transmembrane proteins (GsiC and GsiD) and a solute-binding protein (GsiB).

Its subcellular location is the cell inner membrane. In terms of biological role, part of the ABC transporter complex GsiABCD involved in glutathione import. Probably responsible for the translocation of the substrate across the membrane. In Escherichia coli O1:K1 / APEC, this protein is Glutathione transport system permease protein GsiD.